Consider the following 492-residue polypeptide: Catalase-1 (492 aa).

Residues H65 and N138 contribute to the active site. Y348 serves as a coordination point for heme.

The protein belongs to the catalase family. In terms of assembly, homotetramer. Heme is required as a cofactor.

It localises to the peroxisome. Its subcellular location is the glyoxysome. The catalysed reaction is 2 H2O2 = O2 + 2 H2O. Its function is as follows. Occurs in almost all aerobically respiring organisms and serves to protect cells from the toxic effects of hydrogen peroxide. The polypeptide is Catalase-1 (CAT1) (Triticum aestivum (Wheat)).